The chain runs to 334 residues: Eukaryotic translation initiation factor 3 subunit H (334 aa).

The MPN domain occupies 21-155 (VQIDGLVVLK…LKAYRLTPKL (135 aa)). The interval 247 to 284 (RNVGKQQQQKHQYTQRKQQENLQRLSRGETPLPEEDVN) is disordered. Residues 251-262 (KQQQQKHQYTQR) show a composition bias toward low complexity.

This sequence belongs to the eIF-3 subunit H family. Component of the eukaryotic translation initiation factor 3 (eIF-3) complex, which is composed of 13 subunits: eif3a, eif3b, eif3c, eif3d, eif3e, eif3f, eif3g, eif3h, eif3i, eif3j, eif3k, eif3l and eif3m.

The protein resides in the cytoplasm. In terms of biological role, component of the eukaryotic translation initiation factor 3 (eIF-3) complex, which is involved in protein synthesis of a specialized repertoire of mRNAs and, together with other initiation factors, stimulates binding of mRNA and methionyl-tRNAi to the 40S ribosome. The eIF-3 complex specifically targets and initiates translation of a subset of mRNAs involved in cell proliferation. In Xenopus laevis (African clawed frog), this protein is Eukaryotic translation initiation factor 3 subunit H (eif3h).